The chain runs to 623 residues: Xaa-Pro aminopeptidase 1 (623 aa).

R77 is a binding site for a peptide. An N6-acetyllysine modification is found at K304. H395 contributes to the a peptide binding site. Mn(2+)-binding residues include D415, D426, and H489. Residues H489, H498, and E523 each coordinate a peptide. Residues E523 and E537 each contribute to the Mn(2+) site.

The protein belongs to the peptidase M24B family. Homodimer. It depends on Mn(2+) as a cofactor.

The protein localises to the cytoplasm. Its subcellular location is the cytosol. It catalyses the reaction Release of any N-terminal amino acid, including proline, that is linked to proline, even from a dipeptide or tripeptide.. Functionally, metalloaminopeptidase that catalyzes the removal of a penultimate prolyl residue from the N-termini of peptides, such as Arg-Pro-Pro. Contributes to the degradation of bradykinin. This Bos taurus (Bovine) protein is Xaa-Pro aminopeptidase 1 (XPNPEP1).